Here is a 172-residue protein sequence, read N- to C-terminus: NAD(P)H-quinone oxidoreductase subunit I, chloroplastic (172 aa).

4Fe-4S ferredoxin-type domains follow at residues 55–84 (GRIH…VDWK) and 95–124 (LNYS…MTEE). Residues Cys-64, Cys-67, Cys-70, Cys-74, Cys-104, Cys-107, Cys-110, and Cys-114 each coordinate [4Fe-4S] cluster.

This sequence belongs to the complex I 23 kDa subunit family. In terms of assembly, NDH is composed of at least 16 different subunits, 5 of which are encoded in the nucleus. [4Fe-4S] cluster serves as cofactor.

Its subcellular location is the plastid. The protein resides in the chloroplast thylakoid membrane. It carries out the reaction a plastoquinone + NADH + (n+1) H(+)(in) = a plastoquinol + NAD(+) + n H(+)(out). The catalysed reaction is a plastoquinone + NADPH + (n+1) H(+)(in) = a plastoquinol + NADP(+) + n H(+)(out). Functionally, NDH shuttles electrons from NAD(P)H:plastoquinone, via FMN and iron-sulfur (Fe-S) centers, to quinones in the photosynthetic chain and possibly in a chloroplast respiratory chain. The immediate electron acceptor for the enzyme in this species is believed to be plastoquinone. Couples the redox reaction to proton translocation, and thus conserves the redox energy in a proton gradient. This is NAD(P)H-quinone oxidoreductase subunit I, chloroplastic from Olimarabidopsis pumila (Dwarf rocket).